Consider the following 293-residue polypeptide: Diaminopimelate epimerase (293 aa).

Positions 13, 46, and 66 each coordinate substrate. The active-site Proton donor is the Cys75. Substrate-binding positions include 76–77 (GN), Asn162, Asn195, and 213–214 (ER). Cys222 acts as the Proton acceptor in catalysis. 223–224 (GT) contacts substrate.

This sequence belongs to the diaminopimelate epimerase family. Homodimer.

The protein localises to the cytoplasm. It carries out the reaction (2S,6S)-2,6-diaminopimelate = meso-2,6-diaminopimelate. It functions in the pathway amino-acid biosynthesis; L-lysine biosynthesis via DAP pathway; DL-2,6-diaminopimelate from LL-2,6-diaminopimelate: step 1/1. In terms of biological role, catalyzes the stereoinversion of LL-2,6-diaminopimelate (L,L-DAP) to meso-diaminopimelate (meso-DAP), a precursor of L-lysine and an essential component of the bacterial peptidoglycan. The chain is Diaminopimelate epimerase from Psychrobacter sp. (strain PRwf-1).